The following is a 590-amino-acid chain: AT-rich interactive domain-containing protein 5A (590 aa).

The interval 1-52 (MAAPPAKGNTEQSEEGDLPQLPVSPKPDDEQSRSQSPTQLQDSPEAGGEQEE) is disordered. Positions 1-294 (MAAPPAKGNT…NKDIQDSPQN (294 aa)) are interaction with SOX9. At Ser-24 the chain carries Phosphoserine. A compositionally biased stretch (polar residues) spans 33–42 (RSQSPTQLQD). In terms of domain architecture, ARID spans 50–142 (QEEEQAFLVS…LVLPYVRHLK (93 aa)). Residues Lys-80 and Lys-89 each participate in a glycyl lysine isopeptide (Lys-Gly) (interchain with G-Cter in ubiquitin) cross-link. The segment at 141-229 (LKGEDDKPLP…SGPSPPLTGA (89 aa)) is disordered. A compositionally biased stretch (basic and acidic residues) spans 160-186 (MAKELRGDDGTTEKLKKAKDSEERRVE). Over residues 187–210 (QTTPGKTKSDATGQTQLPCQGSSR) the composition is skewed to polar residues. Ser-253 and Ser-283 each carry phosphoserine. Disordered regions lie at residues 275-323 (EGCR…RMEA), 367-402 (GPPG…TRKR), and 419-443 (VPTE…RGLE). Residues 367–381 (GPPGKEEGPTTKESH) show a composition bias toward basic and acidic residues. Phosphoserine is present on residues Ser-433 and Ser-458.

In terms of assembly, interacts with SOX9. Interacts with ESR1. Interacts with RORC. Phosphorylated by MAPK14 on serine residues involving a TLR4 signaling pathway upon lipopolysaccharide (LPS) stimulation leading to its ubiquitination and proteasomal degradation. Post-translationally, ubiquitinated leading to proteasomal degradation; involving WWP1 linked to MAPK14-mediated phosphorylation upon LPS stimulation. In terms of tissue distribution, expressed in T cells (at protein level). Expressed at high levels in cartilage, heart, testis and bone.

The protein resides in the nucleus. Its function is as follows. DNA-binding protein that may regulate transcription and act as a repressor by binding to AT-rich stretches in the promoter region of target genes. May positively regulate chondrocyte-specific transcription such as of COL2A1 in collaboration with SOX9 and positively regulate histone H3 acetylation at chondrocyte-specific genes. May stimulate early-stage chondrocyte differentiation and inhibit later stage differention. Can repress ESR1-mediated transcriptional activation; proposed to act as corepressor for selective nuclear hormone receptors. As an RNA-binding protein, involved in the regulation of inflammatory response by stabilizing selective inflammation-related mRNAs, such as STAT3 and TBX21. Also stabilizes IL6 mRNA. Binds to stem loop structures located in the 3'UTRs of IL6, STAT3 and TBX21 mRNAs; at least for STAT3 prevents binding of ZC3H12A to the mRNA stem loop structure thus inhibiting its degradation activity. Contributes to elevated IL6 levels possibly implicated in autoimmunity processes. IL6-dependent stabilization of STAT3 mRNA may promote differentiation of naive CD4+ T-cells into T-helper Th17 cells. In CD4+ T-cells may also inhibit RORC-induced Th17 cell differentiation independently of IL6 signaling. Stabilization of TBX21 mRNA contributes to elevated interferon-gamma secretion in Th1 cells possibly implicated in the establishment of septic shock. Stabilizes TNFRSF4/OX40 mRNA by binding to the conserved stem loop structure in its 3'UTR; thereby competing with the mRNA-destabilizing functions of RC3H1 and endoribonuclease ZC3H12A. The protein is AT-rich interactive domain-containing protein 5A (Arid5a) of Mus musculus (Mouse).